The primary structure comprises 1279 residues: ATP-dependent helicase/nuclease subunit A (1279 aa).

The UvrD-like helicase ATP-binding domain maps to 4 to 499 (TKWTDEQRQA…VKLFKNFRSR (496 aa)). Residue 25 to 32 (AGAGAGKT) participates in ATP binding. In terms of domain architecture, UvrD-like helicase C-terminal spans 526-853 (EEALKVGASY…RIMSIHKSKG (328 aa)).

It belongs to the helicase family. AddA subfamily. Heterodimer of AddA and AddB/RexB. Mg(2+) serves as cofactor.

It carries out the reaction Couples ATP hydrolysis with the unwinding of duplex DNA by translocating in the 3'-5' direction.. It catalyses the reaction ATP + H2O = ADP + phosphate + H(+). Functionally, the heterodimer acts as both an ATP-dependent DNA helicase and an ATP-dependent, dual-direction single-stranded exonuclease. Recognizes the chi site generating a DNA molecule suitable for the initiation of homologous recombination. The AddA nuclease domain is required for chi fragment generation; this subunit has the helicase and 3' -&gt; 5' nuclease activities. In Clostridium botulinum (strain Hall / ATCC 3502 / NCTC 13319 / Type A), this protein is ATP-dependent helicase/nuclease subunit A.